The chain runs to 177 residues: Probable adenylyl-sulfate kinase (177 aa).

12–19 (GLSGAGKT) lines the ATP pocket. The active-site Phosphoserine intermediate is the S86.

Belongs to the APS kinase family.

The catalysed reaction is adenosine 5'-phosphosulfate + ATP = 3'-phosphoadenylyl sulfate + ADP + H(+). It participates in sulfur metabolism; hydrogen sulfide biosynthesis; sulfite from sulfate: step 2/3. Its function is as follows. Catalyzes the synthesis of activated sulfate. The sequence is that of Probable adenylyl-sulfate kinase (cysC) from Synechocystis sp. (strain ATCC 27184 / PCC 6803 / Kazusa).